The following is a 310-amino-acid chain: Uridine phosphorylase 1 (310 aa).

Residues G60, R94, and 138–141 each bind phosphate; that span reads RIGT. Residues 142-143 and 217-219 contribute to the uridine site; these read SG and QGR.

Belongs to the PNP/UDP phosphorylase family. Homodimer.

It catalyses the reaction uridine + phosphate = alpha-D-ribose 1-phosphate + uracil. The catalysed reaction is 2'-deoxyuridine + phosphate = 2-deoxy-alpha-D-ribose 1-phosphate + uracil. Its pathway is pyrimidine metabolism; UMP biosynthesis via salvage pathway; uracil from uridine (phosphorylase route): step 1/1. Its function is as follows. Catalyzes the reversible phosphorylytic cleavage of uridine to uracil and ribose-1-phosphate which can then be utilized as carbon and energy sources or in the rescue of pyrimidine bases for nucleotide synthesis. Shows broad substrate specificity and can also accept deoxyuridine and other analogous compounds. The chain is Uridine phosphorylase 1 from Homo sapiens (Human).